The following is a 193-amino-acid chain: Ribosomal RNA large subunit methyltransferase E (193 aa).

5 residues coordinate S-adenosyl-L-methionine: Gly48, Phe50, Asp67, Asn85, and Asp107. The active-site Proton acceptor is Lys147.

The protein belongs to the class I-like SAM-binding methyltransferase superfamily. RNA methyltransferase RlmE family.

The protein localises to the cytoplasm. The catalysed reaction is uridine(2552) in 23S rRNA + S-adenosyl-L-methionine = 2'-O-methyluridine(2552) in 23S rRNA + S-adenosyl-L-homocysteine + H(+). Specifically methylates the uridine in position 2552 of 23S rRNA at the 2'-O position of the ribose in the fully assembled 50S ribosomal subunit. The protein is Ribosomal RNA large subunit methyltransferase E of Borrelia duttonii (strain Ly).